Here is a 946-residue protein sequence, read N- to C-terminus: Bifunctional glutamine synthetase adenylyltransferase/adenylyl-removing enzyme (946 aa).

Residues M1–E440 are adenylyl removase. Residues S449 to E946 form an adenylyl transferase region.

The protein belongs to the GlnE family. Mg(2+) is required as a cofactor.

The catalysed reaction is [glutamine synthetase]-O(4)-(5'-adenylyl)-L-tyrosine + phosphate = [glutamine synthetase]-L-tyrosine + ADP. The enzyme catalyses [glutamine synthetase]-L-tyrosine + ATP = [glutamine synthetase]-O(4)-(5'-adenylyl)-L-tyrosine + diphosphate. Involved in the regulation of glutamine synthetase GlnA, a key enzyme in the process to assimilate ammonia. When cellular nitrogen levels are high, the C-terminal adenylyl transferase (AT) inactivates GlnA by covalent transfer of an adenylyl group from ATP to specific tyrosine residue of GlnA, thus reducing its activity. Conversely, when nitrogen levels are low, the N-terminal adenylyl removase (AR) activates GlnA by removing the adenylyl group by phosphorolysis, increasing its activity. The regulatory region of GlnE binds the signal transduction protein PII (GlnB) which indicates the nitrogen status of the cell. The polypeptide is Bifunctional glutamine synthetase adenylyltransferase/adenylyl-removing enzyme (Shigella sonnei (strain Ss046)).